Reading from the N-terminus, the 329-residue chain is MELHILEHRLQVASVAKESIPLFTYGLIKLAFLSSKTRCKFFSLTETPEDYTIIVDEEGFLELPSSEHLSVADATWLALNVVSGGGSFSSSQPIGVTKIAKSVIAPLADQNISVFMLSTYQTDFILVRERDLPFVTHTLSSEFTILRVVNGETVAAENLSFTNGFVKPKMVQRPVIHPLSSPSNRFCVTSLDPDTLPAVATLLMDVMFYSNGVKDPMAASDDCGHIRFFSFSLIEGYISLVMDVQTQQRFPSHLLFTSASGELWKMVRIGGQPLGFDECGIVAQISEPLAAADIPAYYISTFKFDHALVPEENISGVIHALKVSQAGKH.

ACT domains lie at 72-140 (ADAT…HTLS) and 262-322 (ELWK…HALK).

It belongs to the GATS family. In terms of assembly, forms homodimers and heterodimers with CASTOR1. Interacts with the GATOR2 complex which is composed of MIOS, SEC13, SEH1L, WDR24 and WDR59; the interaction is not regulated by arginine.

Its subcellular location is the cytoplasm. The protein resides in the cytosol. In terms of biological role, functions as a negative regulator of the TORC1 signaling pathway through the GATOR complex. As part of homodimers or heterodimers with CASTOR1, directly binds and inhibits the GATOR subcomplex GATOR2 and thereby mTORC1. Does not directly bind arginine, but binding of arginine to CASTOR1 disrupts the interaction of CASTOR2-containing heterodimers with GATOR2 which can in turn activate mTORC1 and the TORC1 signaling pathway. This Mus musculus (Mouse) protein is Cytosolic arginine sensor for mTORC1 subunit 2.